The chain runs to 363 residues: Dihydroorotate dehydrogenase (quinone) (363 aa).

FMN contacts are provided by residues 70-74 and Thr94; that span reads AGFDK. Lys74 contributes to the substrate binding site. 119-123 is a binding site for substrate; it reads NRMGF. The FMN site is built by Asn147 and Asn180. Asn180 contacts substrate. The active-site Nucleophile is the Ser183. A substrate-binding site is contributed by Asn185. FMN contacts are provided by Lys216 and Thr244. Residue 245–246 participates in substrate binding; sequence NT. Residues Gly270, Gly299, and 320–321 contribute to the FMN site; that span reads YT.

Belongs to the dihydroorotate dehydrogenase family. Type 2 subfamily. Monomer. Requires FMN as cofactor.

It is found in the cell membrane. It carries out the reaction (S)-dihydroorotate + a quinone = orotate + a quinol. Its pathway is pyrimidine metabolism; UMP biosynthesis via de novo pathway; orotate from (S)-dihydroorotate (quinone route): step 1/1. In terms of biological role, catalyzes the conversion of dihydroorotate to orotate with quinone as electron acceptor. The chain is Dihydroorotate dehydrogenase (quinone) from Corynebacterium diphtheriae (strain ATCC 700971 / NCTC 13129 / Biotype gravis).